We begin with the raw amino-acid sequence, 344 residues long: Beta-1,4-galactosyltransferase 4 (344 aa).

Topologically, residues 1-12 are cytoplasmic; the sequence is MGCNPPYHLSYR. Residues 13 to 38 traverse the membrane as a helical; Signal-anchor for type II membrane protein segment; the sequence is LRLLLLFTLCLTVVGWATSNYFVGAI. At 39–344 the chain is on the lumenal side; that stretch reads QVIPKAKDFM…NITVDFWTAA (306 aa). Cysteines 77 and 118 form a disulfide. UDP-alpha-D-galactose-binding positions include 129–133, 168–170, and 195–196; these read PHRNR, FNR, and VD. Residues Cys-189 and Cys-208 are joined by a disulfide bond. Residue Asp-196 participates in Mn(2+) binding. Asn-220 carries N-linked (GlcNAc...) asparagine glycosylation. Residues Tyr-224 and Trp-256 each contribute to the UDP-alpha-D-galactose site. 258–261 is an N-acetyl-D-glucosamine binding site; sequence GEDD. His-289 contributes to the Mn(2+) binding site. 289–291 contributes to the UDP-alpha-D-galactose binding site; the sequence is HTR. Arg-301 lines the N-acetyl-D-glucosamine pocket. The N-linked (GlcNAc...) asparagine glycan is linked to Asn-335.

The protein belongs to the glycosyltransferase 7 family. In terms of assembly, interacts with SLC35A2/UGT1. The cofactor is Mn(2+).

It localises to the golgi apparatus membrane. The protein resides in the secreted. The enzyme catalyses N-acetyl-D-glucosamine + UDP-alpha-D-galactose = beta-D-galactosyl-(1-&gt;4)-N-acetyl-D-glucosamine + UDP + H(+). The catalysed reaction is a beta-D-GlcNAc-(1-&gt;3)-beta-D-Gal-(1-&gt;4)-beta-D-Glc-(1&lt;-&gt;1)-Cer(d18:1(4E)) + UDP-alpha-D-galactose = a neolactoside nLc4Cer(d18:1(4E)) + UDP + H(+). It carries out the reaction 3-O-{beta-D-galactosyl-(1-&gt;3)-[6-O-sulfo-N-acetyl-beta-D-glucosaminyl-(1-&gt;6)]-N-acetyl-alpha-D-galactosaminyl}-L-seryl-[protein] + UDP-alpha-D-galactose = 3-O-{beta-D-galactosyl-(1-&gt;3)-[beta-D-galactosyl-(1-&gt;4)-6-O-sulfo-N-acetyl-beta-D-glucosaminyl-(1-&gt;6)]-N-acetyl-alpha-D-galactosaminyl}-L-seryl-[protein] + UDP + H(+). It catalyses the reaction 3-O-{beta-D-galactosyl-(1-&gt;3)-[6-O-sulfo-N-acetyl-beta-D-glucosaminyl-(1-&gt;6)]-N-acetyl-alpha-D-galactosaminyl}-L-threonyl-[protein] + UDP-alpha-D-galactose = 3-O-{beta-D-galactosyl-(1-&gt;3)-[beta-D-galactosyl-(1-&gt;4)-6-O-sulfo-N-acetyl-beta-D-glucosaminyl-(1-&gt;6)]-N-acetyl-alpha-D-galactosaminyl}-L-threonyl-[protein] + UDP + H(+). Its pathway is protein modification; protein glycosylation. It participates in glycolipid biosynthesis. In terms of biological role, galactose (Gal) transferase involved in the synthesis of terminal N-acetyllactosamine (LacNac) unit present on glycan chains of glycoproteins and glycosphingolipids. Catalyzes the transfer of Gal residue via a beta1-&gt;4 linkage from UDP-Gal to the non-reducing terminal N-acetyl glucosamine 6-O-sulfate (6-O-sulfoGlcNAc) in the linearly growing chain of both N- and O-linked keratan sulfate proteoglycans. Cooperates with B3GNT7 N-acetyl glucosamine transferase and CHST6 and CHST1 sulfotransferases to construct and elongate mono- and disulfated disaccharide units [-&gt;3Galbeta1-&gt;4(6-sulfoGlcNAcbeta)1-&gt;] and [-&gt;3(6-sulfoGalbeta)1-&gt;4(6-sulfoGlcNAcbeta)1-&gt;] within keratan sulfate polymer. Transfers Gal residue via a beta1-&gt;4 linkage to terminal 6-O-sulfoGlcNAc within the LacNac unit of core 2 O-glycans forming 6-sulfo-sialyl-Lewis X (sLex). May contribute to the generation of sLex epitope on mucin-type glycoproteins that serve as ligands for SELL/L-selectin, a major regulator of leukocyte migration. In the biosynthesis pathway of neolacto-series glycosphingolipids, transfers Gal residue via a beta1-&gt;4 linkage to terminal GlcNAc of a lactotriaosylceramide (Lc3Cer) acceptor to form a neolactotetraosylceramide. This Mus musculus (Mouse) protein is Beta-1,4-galactosyltransferase 4.